Consider the following 459-residue polypeptide: D(1)-like dopamine receptor (459 aa).

The Extracellular portion of the chain corresponds to 1 to 23 (MAQNFSTVGDGKQMLLERDSSKR). N-linked (GlcNAc...) asparagine glycosylation is present at N4. The helical transmembrane segment at 24-49 (VLTGCFLSLLIFTTLLGNTLVCVAVT) threads the bilayer. The Cytoplasmic portion of the chain corresponds to 50–60 (KFRHLRSKVTN). A helical membrane pass occupies residues 61-87 (FFVISLAISDLLVAILVMPWKAATEIM). The Extracellular portion of the chain corresponds to 88–96 (GFWPFGEFC). A disulfide bridge connects residues C96 and C187. Residues 97–119 (NIWVAFDIMCSTASILNLCVISV) form a helical membrane-spanning segment. Topologically, residues 120 to 138 (DRYWAISSPFRYERKMTPK) are cytoplasmic. Residues 139–164 (VACLMISVAWTLSVLISFIPVQLNWH) traverse the membrane as a helical segment. At 165 to 191 (KAQTASYVELNGTYAGDLPPDNCDSSL) the chain is on the extracellular side. Residues 192-216 (NRTYAISSSLISFYIPVAIMIVTYT) form a helical membrane-spanning segment. The Cytoplasmic portion of the chain corresponds to 217-269 (RIYRIAQKQIRRISALERAAESAQNRHSSMGNSLSMESECSFKMSFKRETKVL). Residues 270-297 (KTLSVIMGVFVCCWLPFFILNCMVPFCE) traverse the membrane as a helical segment. Topologically, residues 298–311 (ADDTTDFPCISSTT) are extracellular. The chain crosses the membrane as a helical span at residues 312–333 (FDVFVWFGWANSSLNPIIYAFN). Over 334–459 (ADFRKAFSIL…QNGQHKSMSC (126 aa)) the chain is Cytoplasmic.

The protein belongs to the G-protein coupled receptor 1 family.

The protein localises to the cell membrane. The protein resides in the cell projection. Its subcellular location is the cilium membrane. In terms of biological role, receptor for dopamine. This is D(1)-like dopamine receptor (d14) from Takifugu rubripes (Japanese pufferfish).